The primary structure comprises 586 residues: Solute carrier family 13 member 2 (586 aa).

3 helical membrane passes run 13 to 33 (SYLIVLCLPIFLLPLPLIVQT), 53 to 73 (ALPLAVTALFPIILFPLMGIM), and 86 to 106 (TNILFVGGLMVAIAVEHWNLH). The segment covering 165–175 (DVEEGNSNPSF) has biased composition (polar residues). The disordered stretch occupies residues 165–209 (DVEEGNSNPSFELQEASPQKEETKLDNGQAVSVSSEPRAQKTKEH). A run of 9 helical transmembrane segments spans residues 215–235 (GLSLCICYSASIGGIATLTGT), 264–284 (FAFPTMVILLLLAWLWLQVLF), 319–339 (PMSFAEKAVTFLFVLLVVLWF), 366–386 (GTVAIFISLIMFIIPSKIPGL), 407–427 (TVNDKMPWNILILLGGGFALA), 445–465 (PLQHVPPSATVLILSLLVAIF), 478–498 (FLPILASMAQAICLHPLYVML), 506–526 (LAFMLPVATPPNAIVFSFGGL), and 535–555 (GFLLNIIGVLTITLSINSWSI).

It belongs to the SLC13A/DASS transporter (TC 2.A.47) family. NADC subfamily. As to expression, highly expressed in kidney and small intestine. Not detectable in brain, heart, stomach and skeletal muscle.

It localises to the apical cell membrane. The enzyme catalyses succinate(out) + 3 Na(+)(out) = succinate(in) + 3 Na(+)(in). It catalyses the reaction fumarate(out) + 3 Na(+)(out) = fumarate(in) + 3 Na(+)(in). The catalysed reaction is 2-oxoglutarate(out) + 3 Na(+)(out) = 2-oxoglutarate(in) + 3 Na(+)(in). Its activity is regulated as follows. Li(+) decreases succinate transport in the presence of Na(+), by competing at one of the three cation binding sites. Low-affinity sodium-dicarboxylate cotransporter, that mediates the entry of citric acid cycle intermediates, such as succinate, citrate, fumarate and alpha-ketoglutarate (2-oxoglutarate) into the small intestine and renal proximal tubule. Can transport citrate in a Na(+)-dependent manner, recognizing the divalent form of citrate rather than the trivalent form which is normally found in blood. Transports the dicarboxylate into the cell with a probable stoichiometry of 3 Na(+) for 1 divalent dicarboxylate, rendering the process electrogenic. Has a critical role in renal dicarboxylate transport. In Mus musculus (Mouse), this protein is Solute carrier family 13 member 2 (Slc13a2).